A 648-amino-acid polypeptide reads, in one-letter code: Acyl-CoA-binding domain-containing protein 5 (648 aa).

Positions Y13–P107 constitute an ACB domain. Residues K34, Y49 to Q53, and K75 contribute to the an acyl-CoA site. Kelch repeat units follow at residues K196–H244, Q256–K306, S307–E357, Y359–E408, N409–S457, and I464–N509. A Phosphoserine modification is found at S517. Residues K520–S632 are a coiled coil. Residues T625–G634 show a composition bias toward polar residues. The disordered stretch occupies residues T625–T648.

The protein belongs to the ACBP family. As to expression, expressed in roots, stems, leaves, flowers and siliques.

The protein localises to the cytoplasm. In terms of biological role, binds medium- and long-chain acyl-CoA esters with very high affinity. Can interact in vitro with oleoyl-CoA, barely with palmitoyl-CoA, but not with arachidonyl-CoA. May function as an intracellular carrier of acyl-CoA esters. The protein is Acyl-CoA-binding domain-containing protein 5 (ACBP5) of Arabidopsis thaliana (Mouse-ear cress).